The chain runs to 366 residues: Trans-enoyl reductase caaB (366 aa).

An Enoyl reductase (ER) domain is found at 19-363; the sequence is GAGQLSIYHD…RQTVSGHKLV (345 aa). Y219 contacts NADP(+).

Belongs to the zinc-containing alcohol dehydrogenase family. Monomer.

Its pathway is secondary metabolite biosynthesis. Its function is as follows. Trans-enoyl reductase; part of the gene cluster that produces the acyltetronic acid derivatives carlosic acid, agglomerin F and carlosic acid methyl ether. The PKS domains of caaA condenses two malonyl-CoAs into an acetyl starter unit, and form 1,3-diketohexanyl-ACP with the help of the trans-enoyl reductase caaB. Next, the C domain of caaA forms the ester bond between the acyl chain and L-malic acid (derived from the TCA cycle) and accepted by the A domain instead of an amino acid. Finally, the terminal reductase/Dieckmann cyclization (R/DKC) domain cyclizes the intermediate and releases the product as carlosic acid. Decarboxylation of carlosic acid followed by formation of the exocyclic double bond is likely to be catalyzed by the cytochrome P450 monooxygenase caaC. Thus, decarboxylation and oxidation would be coupled (performed by one enzyme) through concomitant abstraction of the hydrogen at C-4. Finally, sequential oxidations of the terminal C-10 methyl group to form carboxylic acid would be catalyzed by the 2-oxoglutarate-dependent dioxygenase caaD, which is required for the biosynthesis of agglomerin F. This chain is Trans-enoyl reductase caaB, found in Aspergillus niger (strain ATCC MYA-4892 / CBS 513.88 / FGSC A1513).